A 34-amino-acid chain; its full sequence is Potassium channel toxin alpha-KTx 6.3 (34 aa).

Cystine bridges form between Cys-3–Cys-24, Cys-9–Cys-29, Cys-13–Cys-31, and Cys-19–Cys-34. Cys-34 is subject to Cysteine amide.

The protein belongs to the short scorpion toxin superfamily. Potassium channel inhibitor family. Alpha-KTx 06 subfamily. In terms of processing, amidated. The amidated toxin shows 5-fold more affinity for Kv1.3/KCNA3 than the synthetic carboxylated form. In terms of tissue distribution, expressed by the venom gland.

It is found in the secreted. Potently blocks voltage-gated potassium channels Kv1.1/KCNA1 (IC(50)=7-11 nM) and Kv1.3/KCNA3 (IC(50)=11-29 pM). Also mildly blocks intermediate (IK) conductance calcium-activated potassium channels (KCa3.1/KCNN4) and ERG1/Kv11.1/KCNH2. Shows ability to suppress proliferation of lymphocytes, which are known to be sensitive to Kv1.3/KCNA3 homotetrameric channel block. This is Potassium channel toxin alpha-KTx 6.3 from Heterometrus spinifer (Asia giant forest scorpion).